The following is a 702-amino-acid chain: Ribosomal RNA large subunit methyltransferase K/L (702 aa).

The 112-residue stretch at 43–154 (LVYQSLMWSR…KETASIALDL (112 aa)) folds into the THUMP domain.

Belongs to the methyltransferase superfamily. RlmKL family.

Its subcellular location is the cytoplasm. It catalyses the reaction guanosine(2445) in 23S rRNA + S-adenosyl-L-methionine = N(2)-methylguanosine(2445) in 23S rRNA + S-adenosyl-L-homocysteine + H(+). It carries out the reaction guanosine(2069) in 23S rRNA + S-adenosyl-L-methionine = N(2)-methylguanosine(2069) in 23S rRNA + S-adenosyl-L-homocysteine + H(+). Its function is as follows. Specifically methylates the guanine in position 2445 (m2G2445) and the guanine in position 2069 (m7G2069) of 23S rRNA. In Shigella boydii serotype 18 (strain CDC 3083-94 / BS512), this protein is Ribosomal RNA large subunit methyltransferase K/L.